A 161-amino-acid chain; its full sequence is Regulator of ribonuclease activity A (161 aa).

It belongs to the RraA family. In terms of assembly, homotrimer. Binds to both RNA-binding sites in the C-terminal region of Rne and to RhlB.

It is found in the cytoplasm. Its function is as follows. Globally modulates RNA abundance by binding to RNase E (Rne) and regulating its endonucleolytic activity. Can modulate Rne action in a substrate-dependent manner by altering the composition of the degradosome. Modulates RNA-binding and helicase activities of the degradosome. The chain is Regulator of ribonuclease activity A from Shewanella sediminis (strain HAW-EB3).